We begin with the raw amino-acid sequence, 144 residues long: Large ribosomal subunit protein uL15 (144 aa).

The interval 1-52 (MIKLESLQDPSPRKRRKKLLGRGPGSGHGKTSGRGHKGDGSRSGYKRRFGYE) is disordered. The span at 22 to 32 (RGPGSGHGKTS) shows a compositional bias: gly residues.

The protein belongs to the universal ribosomal protein uL15 family. Part of the 50S ribosomal subunit.

Binds to the 23S rRNA. The protein is Large ribosomal subunit protein uL15 of Chlamydia felis (strain Fe/C-56) (Chlamydophila felis).